Consider the following 306-residue polypeptide: Curved DNA-binding protein (306 aa).

One can recognise a J domain in the interval 5-69; it reads DYYAIMGVKP…QRRAEYDQMW (65 aa).

The protein localises to the cytoplasm. The protein resides in the nucleoid. In terms of biological role, DNA-binding protein that preferentially recognizes a curved DNA sequence. It is probably a functional analog of DnaJ; displays overlapping activities with DnaJ, but functions under different conditions, probably acting as a molecular chaperone in an adaptive response to environmental stresses other than heat shock. Lacks autonomous chaperone activity; binds native substrates and targets them for recognition by DnaK. Its activity is inhibited by the binding of CbpM. The chain is Curved DNA-binding protein from Shigella flexneri.